We begin with the raw amino-acid sequence, 145 residues long: uncharacterized protein (145 aa).

An N-terminal signal peptide occupies residues 1–23 (MSSSNLSSRKTRISAHFLDAAPA). Residues 123-140 (VLLLIIALVFLLFVAIFI) form a helical membrane-spanning segment.

The protein localises to the membrane. This is an uncharacterized protein from Archaeoglobus fulgidus (strain ATCC 49558 / DSM 4304 / JCM 9628 / NBRC 100126 / VC-16).